A 154-amino-acid chain; its full sequence is Transcriptional repressor NrdR (154 aa).

Residues 3–34 (CPFCGANDTKVIDSRLVAEGEQVRRRRECVAC) fold into a zinc finger. The ATP-cone domain maps to 49–139 (PRLIKQDGTR…VYRRFQDLDE (91 aa)).

This sequence belongs to the NrdR family. Zn(2+) is required as a cofactor.

Its function is as follows. Negatively regulates transcription of bacterial ribonucleotide reductase nrd genes and operons by binding to NrdR-boxes. This Pseudomonas putida (strain W619) protein is Transcriptional repressor NrdR.